Consider the following 225-residue polypeptide: Lectin (225 aa).

As to quaternary structure, homotetramer.

Chitin-binding lectin. Agglutinates rabbit erythrocytes, but not human erythrocytes. This is Lectin from Vachellia farnesiana (Sweet acacia).